The following is an 896-amino-acid chain: Microsomal triglyceride transfer protein large subunit (896 aa).

Positions 1-21 (MILLAVLFLCFFSSYSASVKG) are cleaved as a signal peptide. A Vitellogenin domain is found at 28-659 (LNNERLYKLT…IFQYIGKAEL (632 aa)). C174 and C194 are oxidised to a cystine.

Heterodimer; heterodimerizes with the protein disulfide isomerase (P4HB/PDI). Interacts with APOB. Interacts with PRAP1.

The protein localises to the endoplasmic reticulum. The protein resides in the golgi apparatus. It catalyses the reaction a 1,2-diacyl-sn-glycero-3-phosphocholine(in) = a 1,2-diacyl-sn-glycero-3-phosphocholine(out). The catalysed reaction is a 1,2-diacyl-sn-glycero-3-phosphoethanolamine(in) = a 1,2-diacyl-sn-glycero-3-phosphoethanolamine(out). The enzyme catalyses a cholesterol ester(in) = a cholesterol ester(out). It carries out the reaction a triacyl-sn-glycerol(in) = a triacyl-sn-glycerol(out). In terms of biological role, catalyzes the transport of triglyceride, cholesteryl ester, and phospholipid between phospholipid surfaces. Required for the assembly and secretion of plasma lipoproteins that contain apolipoprotein B. May be involved in regulating cholesteryl ester biosynthesis in cells that produce lipoproteins. The sequence is that of Microsomal triglyceride transfer protein large subunit (Mttp) from Rattus norvegicus (Rat).